A 277-amino-acid polypeptide reads, in one-letter code: Shikimate dehydrogenase (NADP(+)) (277 aa).

Residues 15–17 (SLS) and threonine 62 each bind shikimate. Residue lysine 66 is the Proton acceptor of the active site. Positions 87 and 102 each coordinate shikimate. Residues 127–131 (GAGGA), 151–156 (NRTVDK), and isoleucine 219 each bind NADP(+). Tyrosine 221 is a shikimate binding site. Glycine 242 provides a ligand contact to NADP(+).

Belongs to the shikimate dehydrogenase family. In terms of assembly, homodimer.

It catalyses the reaction shikimate + NADP(+) = 3-dehydroshikimate + NADPH + H(+). It participates in metabolic intermediate biosynthesis; chorismate biosynthesis; chorismate from D-erythrose 4-phosphate and phosphoenolpyruvate: step 4/7. Involved in the biosynthesis of the chorismate, which leads to the biosynthesis of aromatic amino acids. Catalyzes the reversible NADPH linked reduction of 3-dehydroshikimate (DHSA) to yield shikimate (SA). The chain is Shikimate dehydrogenase (NADP(+)) from Bacillus cereus (strain G9842).